Here is a 537-residue protein sequence, read N- to C-terminus: Beta-1-syntrophin (537 aa).

Ala2 is subject to N-acetylalanine. 2 consecutive PH domains span residues 18–297 (RAQR…SNAG) and 321–432 (EIRH…QGCH). Phosphoserine is present on residues Ser86, Ser125, and Ser204. Positions 111-194 (GVKVLKQELG…EVLLEVKYMR (84 aa)) constitute a PDZ domain. The segment at 204-233 (SPVSEIGWETPPPESPRLGGGSAEPLSSQS) is disordered. Thr213 is subject to Phosphothreonine. Phosphoserine occurs at positions 218, 225, 231, 235, and 388. Residues 481 to 537 (PYEKLKMSSDDGIRMLYLDFGGKEGEIQLDLHSCPKPIVFIIHSFLSAKITRLGLVA) form the SU domain. The tract at residues 517 to 537 (PIVFIIHSFLSAKITRLGLVA) is calmodulin-binding.

Belongs to the syntrophin family. Monomer and homodimer. Interacts with the viral HTLV-1 TAX protein and other members of the syntrophin family: SNTA1 and SNTB2. Interacts with the dystrophin protein DMD and related proteins DTNA and UTRN and with the sodium channel proteins SCN4A and SCN5A. Interacts with DTNB. Phosphorylated by CaM-kinase II. In terms of tissue distribution, ubiquitous. Expressed at high levels in the liver.

The protein localises to the cell membrane. It localises to the sarcolemma. Its subcellular location is the cell junction. The protein resides in the cytoplasm. It is found in the cytoskeleton. Functionally, adapter protein that binds to and probably organizes the subcellular localization of a variety of membrane proteins. May link various receptors to the actin cytoskeleton and the dystrophin glycoprotein complex. The chain is Beta-1-syntrophin (Sntb1) from Mus musculus (Mouse).